A 140-amino-acid chain; its full sequence is Nucleoside diphosphate kinase (140 aa).

Residues Lys11, Phe59, Arg87, Thr93, Arg104, and Asn114 each contribute to the ATP site. His117 serves as the catalytic Pros-phosphohistidine intermediate.

Belongs to the NDK family. Homotetramer. It depends on Mg(2+) as a cofactor.

It localises to the cytoplasm. It carries out the reaction a 2'-deoxyribonucleoside 5'-diphosphate + ATP = a 2'-deoxyribonucleoside 5'-triphosphate + ADP. The enzyme catalyses a ribonucleoside 5'-diphosphate + ATP = a ribonucleoside 5'-triphosphate + ADP. Its function is as follows. Major role in the synthesis of nucleoside triphosphates other than ATP. The ATP gamma phosphate is transferred to the NDP beta phosphate via a ping-pong mechanism, using a phosphorylated active-site intermediate. The sequence is that of Nucleoside diphosphate kinase from Rhodospirillum rubrum (strain ATCC 11170 / ATH 1.1.1 / DSM 467 / LMG 4362 / NCIMB 8255 / S1).